Reading from the N-terminus, the 550-residue chain is CTP synthase (550 aa).

Positions 1 to 271 are amidoligase domain; that stretch reads MTRYIFITGG…DAEVLDVFGM (271 aa). Ser-13 is a CTP binding site. Ser-13 serves as a coordination point for UTP. 14–19 serves as a coordination point for ATP; sequence SLGKGL. Tyr-54 lines the L-glutamine pocket. Residue Asp-71 coordinates ATP. Residues Asp-71 and Glu-145 each coordinate Mg(2+). Residues 152–154, 192–197, and Lys-228 contribute to the CTP site; these read DIE and KTKPTQ. UTP is bound by residues 192–197 and Lys-228; that span reads KTKPTQ. Residues 297–549 form the Glutamine amidotransferase type-1 domain; the sequence is TIAVVGKYTV…IAAAKEHGRL (253 aa). L-glutamine is bound at residue Gly-361. Cys-388 functions as the Nucleophile; for glutamine hydrolysis in the catalytic mechanism. L-glutamine-binding positions include 389-392, Glu-412, and Arg-477; that span reads FGMQ. Active-site residues include His-522 and Glu-524.

The protein belongs to the CTP synthase family. Homotetramer.

It carries out the reaction UTP + L-glutamine + ATP + H2O = CTP + L-glutamate + ADP + phosphate + 2 H(+). The enzyme catalyses L-glutamine + H2O = L-glutamate + NH4(+). It catalyses the reaction UTP + NH4(+) + ATP = CTP + ADP + phosphate + 2 H(+). It participates in pyrimidine metabolism; CTP biosynthesis via de novo pathway; CTP from UDP: step 2/2. Allosterically activated by GTP, when glutamine is the substrate; GTP has no effect on the reaction when ammonia is the substrate. The allosteric effector GTP functions by stabilizing the protein conformation that binds the tetrahedral intermediate(s) formed during glutamine hydrolysis. Inhibited by the product CTP, via allosteric rather than competitive inhibition. Catalyzes the ATP-dependent amination of UTP to CTP with either L-glutamine or ammonia as the source of nitrogen. Regulates intracellular CTP levels through interactions with the four ribonucleotide triphosphates. The chain is CTP synthase from Caulobacter vibrioides (strain ATCC 19089 / CIP 103742 / CB 15) (Caulobacter crescentus).